We begin with the raw amino-acid sequence, 441 residues long: Ribosomal protein uS12 methylthiotransferase RimO (441 aa).

In terms of domain architecture, MTTase N-terminal spans 6-116; that stretch reads PKVGFVSLGC…VMTAVHANLP (111 aa). 6 residues coordinate [4Fe-4S] cluster: cysteine 15, cysteine 51, cysteine 80, cysteine 147, cysteine 151, and cysteine 154. Residues 133–370 enclose the Radical SAM core domain; sequence LTPQHYAYLK…MEVQESISAE (238 aa). Residues 373–439 form the TRAM domain; the sequence is RRKIGRIETV…GHDLWAAPPA (67 aa).

This sequence belongs to the methylthiotransferase family. RimO subfamily. It depends on [4Fe-4S] cluster as a cofactor.

Its subcellular location is the cytoplasm. It catalyses the reaction L-aspartate(89)-[ribosomal protein uS12]-hydrogen + (sulfur carrier)-SH + AH2 + 2 S-adenosyl-L-methionine = 3-methylsulfanyl-L-aspartate(89)-[ribosomal protein uS12]-hydrogen + (sulfur carrier)-H + 5'-deoxyadenosine + L-methionine + A + S-adenosyl-L-homocysteine + 2 H(+). Catalyzes the methylthiolation of an aspartic acid residue of ribosomal protein uS12. This chain is Ribosomal protein uS12 methylthiotransferase RimO, found in Methylobacillus flagellatus (strain ATCC 51484 / DSM 6875 / VKM B-1610 / KT).